The chain runs to 501 residues: Proline--tRNA ligase (501 aa).

Belongs to the class-II aminoacyl-tRNA synthetase family.

It carries out the reaction tRNA(Pro) + L-proline + ATP = L-prolyl-tRNA(Pro) + AMP + diphosphate. The chain is Proline--tRNA ligase from Encephalitozoon cuniculi (strain GB-M1) (Microsporidian parasite).